We begin with the raw amino-acid sequence, 266 residues long: Dihydropteroate synthase (266 aa).

One can recognise a Pterin-binding domain in the interval 12–260 (AAIMGILNVT…DVKANQEIVA (249 aa)). Residue Asn19 coordinates Mg(2+). Residues Thr59, Asp93, Asn112, Asp176, Lys212, and 248 to 250 (RVH) contribute to the (7,8-dihydropterin-6-yl)methyl diphosphate site.

It belongs to the DHPS family. In terms of assembly, homodimer or homotrimer. Mg(2+) serves as cofactor.

It carries out the reaction (7,8-dihydropterin-6-yl)methyl diphosphate + 4-aminobenzoate = 7,8-dihydropteroate + diphosphate. Its pathway is cofactor biosynthesis; tetrahydrofolate biosynthesis; 7,8-dihydrofolate from 2-amino-4-hydroxy-6-hydroxymethyl-7,8-dihydropteridine diphosphate and 4-aminobenzoate: step 1/2. Functionally, catalyzes the condensation of para-aminobenzoate (pABA) with 6-hydroxymethyl-7,8-dihydropterin diphosphate (DHPt-PP) to form 7,8-dihydropteroate (H2Pte), the immediate precursor of folate derivatives. The protein is Dihydropteroate synthase (folP) of Streptococcus pyogenes.